A 57-amino-acid polypeptide reads, in one-letter code: uncharacterized protein (57 aa).

The helical transmembrane segment at 4–26 (FMPIRVFLYSYVIINSLLSSFFH) threads the bilayer.

The protein localises to the membrane. This is an uncharacterized protein from Saccharomyces cerevisiae (strain ATCC 204508 / S288c) (Baker's yeast).